A 192-amino-acid polypeptide reads, in one-letter code: Fumarylpyruvate hydrolase (192 aa).

Glu-41, Glu-43, and Asp-72 together coordinate a divalent metal cation.

Belongs to the FAH family. It depends on Mg(2+) as a cofactor. Mn(2+) is required as a cofactor.

It carries out the reaction 3-fumarylpyruvate + H2O = fumarate + pyruvate + H(+). It functions in the pathway aromatic compound metabolism; naphthalene degradation. Its function is as follows. Involved in the catabolism of gentisate (2,5-dihydroxybenzoate) a key intermediates in the aerobic pathways for the metabolism of a large number of aromatic compoun such as naphthalene. Catalyzes the hydrolytic cleavage of fumarylpyruvate to form fumarate and pyruvate. The polypeptide is Fumarylpyruvate hydrolase (Ralstonia sp).